A 245-amino-acid chain; its full sequence is Collagen triple helix repeat-containing protein 1 (245 aa).

Positions 1 to 32 (MHPQGRAASPQLLLGLFLVLLLLLQLSAPSSA) are cleaved as a signal peptide. Positions 59–92 (QGPAGVPGRDGSPGANGIPGTPGIPGRDGFKGEK) constitute a Collagen-like domain. Positions 64–87 (VPGRDGSPGANGIPGTPGIPGRDG) are disordered. Asn188 is a glycosylation site (N-linked (GlcNAc...) asparagine).

Post-translationally, N-glycosylated. Expressed after injury in the carotid arteries (at protein level). Expressed in brain, lung, and after injury in fibroblasts of the adventitia and the neointima of the arteries.

The protein localises to the secreted. The protein resides in the extracellular space. It is found in the extracellular matrix. Functionally, its overexpression in smooth muscle cell lines increases their migratory ability and inhibits collagen type I expression. May act as a negative regulator of collagen matrix deposition. This Rattus norvegicus (Rat) protein is Collagen triple helix repeat-containing protein 1 (Cthrc1).